The primary structure comprises 298 residues: Ribosomal protein L11 methyltransferase (298 aa).

S-adenosyl-L-methionine contacts are provided by Thr-152, Gly-176, Asp-198, and Asn-236.

Belongs to the methyltransferase superfamily. PrmA family.

The protein resides in the cytoplasm. The catalysed reaction is L-lysyl-[protein] + 3 S-adenosyl-L-methionine = N(6),N(6),N(6)-trimethyl-L-lysyl-[protein] + 3 S-adenosyl-L-homocysteine + 3 H(+). In terms of biological role, methylates ribosomal protein L11. The protein is Ribosomal protein L11 methyltransferase of Polaromonas sp. (strain JS666 / ATCC BAA-500).